Reading from the N-terminus, the 161-residue chain is UPF0763 protein Cla_1130 (161 aa).

Belongs to the UPF0763 family.

This chain is UPF0763 protein Cla_1130, found in Campylobacter lari (strain RM2100 / D67 / ATCC BAA-1060).